A 218-amino-acid polypeptide reads, in one-letter code: Dehydration-responsive element-binding protein 1B (218 aa).

The disordered stretch occupies residues 1–26; the sequence is MEVEEAAYRTVWSEPPKRPAGRTKFR. A DNA-binding region (AP2/ERF) is located at residues 32 to 95; that stretch reads VYRGVRRRGG…RGRAACLNFA (64 aa). The interval 131–151 is disordered; sequence SAAPSSPAETFANDGDEEEDN.

This sequence belongs to the AP2/ERF transcription factor family. ERF subfamily.

The protein localises to the nucleus. In terms of biological role, transcriptional activator that binds specifically to the DNA sequence 5'-[AG]CCGAC-3'. Binding to the C-repeat/DRE element mediates high salinity- and dehydration-inducible transcription. Confers resistance to high salt, cold and drought stress. This chain is Dehydration-responsive element-binding protein 1B (DREB1B), found in Oryza sativa subsp. japonica (Rice).